A 198-amino-acid polypeptide reads, in one-letter code: Elongation factor Ts (198 aa).

The interval 82-85 is involved in Mg(2+) ion dislocation from EF-Tu; sequence SDFV.

Belongs to the EF-Ts family.

The protein resides in the cytoplasm. Its function is as follows. Associates with the EF-Tu.GDP complex and induces the exchange of GDP to GTP. It remains bound to the aminoacyl-tRNA.EF-Tu.GTP complex up to the GTP hydrolysis stage on the ribosome. This is Elongation factor Ts from Desulfosudis oleivorans (strain DSM 6200 / JCM 39069 / Hxd3) (Desulfococcus oleovorans).